Reading from the N-terminus, the 292-residue chain is Ribosomal RNA small subunit methyltransferase A (292 aa).

The S-adenosyl-L-methionine site is built by N29, L31, G56, E77, D102, and N127.

It belongs to the class I-like SAM-binding methyltransferase superfamily. rRNA adenine N(6)-methyltransferase family. RsmA subfamily.

The protein resides in the cytoplasm. The catalysed reaction is adenosine(1518)/adenosine(1519) in 16S rRNA + 4 S-adenosyl-L-methionine = N(6)-dimethyladenosine(1518)/N(6)-dimethyladenosine(1519) in 16S rRNA + 4 S-adenosyl-L-homocysteine + 4 H(+). Specifically dimethylates two adjacent adenosines (A1518 and A1519) in the loop of a conserved hairpin near the 3'-end of 16S rRNA in the 30S particle. May play a critical role in biogenesis of 30S subunits. The sequence is that of Ribosomal RNA small subunit methyltransferase A from Bacillus subtilis (strain 168).